Here is a 223-residue protein sequence, read N- to C-terminus: MOB-like protein phocein (223 aa).

The interval 1–23 (MTAATENRTVRRNGPGTKRADWN) is disordered. Residues cysteine 92, cysteine 97, histidine 169, and histidine 174 each contribute to the Zn(2+) site.

It belongs to the MOB1/phocein family.

Its subcellular location is the cytoplasm. It is found in the perinuclear region. It localises to the membrane. The protein localises to the golgi apparatus. The protein resides in the golgi stack membrane. May play a role in membrane trafficking, specifically in membrane budding reactions. This chain is MOB-like protein phocein, found in Caenorhabditis elegans.